A 432-amino-acid polypeptide reads, in one-letter code: Glutamate-1-semialdehyde 2,1-aminomutase (432 aa).

The residue at position 269 (Lys269) is an N6-(pyridoxal phosphate)lysine.

This sequence belongs to the class-III pyridoxal-phosphate-dependent aminotransferase family. HemL subfamily. In terms of assembly, homodimer. It depends on pyridoxal 5'-phosphate as a cofactor.

Its subcellular location is the cytoplasm. It catalyses the reaction (S)-4-amino-5-oxopentanoate = 5-aminolevulinate. Its pathway is porphyrin-containing compound metabolism; protoporphyrin-IX biosynthesis; 5-aminolevulinate from L-glutamyl-tRNA(Glu): step 2/2. The sequence is that of Glutamate-1-semialdehyde 2,1-aminomutase from Desulforamulus reducens (strain ATCC BAA-1160 / DSM 100696 / MI-1) (Desulfotomaculum reducens).